A 161-amino-acid polypeptide reads, in one-letter code: ATP synthase subunit b (161 aa).

Residues A11–L31 form a helical membrane-spanning segment.

It belongs to the ATPase B chain family. In terms of assembly, F-type ATPases have 2 components, F(1) - the catalytic core - and F(0) - the membrane proton channel. F(1) has five subunits: alpha(3), beta(3), gamma(1), delta(1), epsilon(1). F(0) has three main subunits: a(1), b(2) and c(10-14). The alpha and beta chains form an alternating ring which encloses part of the gamma chain. F(1) is attached to F(0) by a central stalk formed by the gamma and epsilon chains, while a peripheral stalk is formed by the delta and b chains.

Its subcellular location is the cell membrane. Functionally, f(1)F(0) ATP synthase produces ATP from ADP in the presence of a proton or sodium gradient. F-type ATPases consist of two structural domains, F(1) containing the extramembraneous catalytic core and F(0) containing the membrane proton channel, linked together by a central stalk and a peripheral stalk. During catalysis, ATP synthesis in the catalytic domain of F(1) is coupled via a rotary mechanism of the central stalk subunits to proton translocation. Its function is as follows. Component of the F(0) channel, it forms part of the peripheral stalk, linking F(1) to F(0). The chain is ATP synthase subunit b from Buchnera aphidicola subsp. Acyrthosiphon pisum (strain APS) (Acyrthosiphon pisum symbiotic bacterium).